Reading from the N-terminus, the 429-residue chain is Ribosomal RNA small subunit methyltransferase B (429 aa).

S-adenosyl-L-methionine is bound by residues 254 to 260 (CAAPGGK), Asp-277, Asp-303, and Asp-322. Catalysis depends on Cys-375, which acts as the Nucleophile. The tract at residues 397 to 419 (ALSETGTPDQPGQQNLPGGEEGD) is disordered. Over residues 400-412 (ETGTPDQPGQQNL) the composition is skewed to polar residues.

This sequence belongs to the class I-like SAM-binding methyltransferase superfamily. RsmB/NOP family.

It localises to the cytoplasm. It carries out the reaction cytidine(967) in 16S rRNA + S-adenosyl-L-methionine = 5-methylcytidine(967) in 16S rRNA + S-adenosyl-L-homocysteine + H(+). Its function is as follows. Specifically methylates the cytosine at position 967 (m5C967) of 16S rRNA. The protein is Ribosomal RNA small subunit methyltransferase B of Salmonella agona (strain SL483).